The primary structure comprises 1548 residues: UDP-glucose:glycoprotein glucosyltransferase (1548 aa).

The N-terminal stretch at 1–22 (MLRAVALCVSVVLIALYTPTSG) is a signal peptide. N181 carries N-linked (GlcNAc...) asparagine glycosylation. Residues 243-253 (TEYKSQDDAPK) show a composition bias toward basic and acidic residues. The interval 243 to 265 (TEYKSQDDAPKPEAGSTSDEDLA) is disordered. N-linked (GlcNAc...) asparagine glycosylation is found at N266 and N864. A glucosyltransferase region spans residues 1227–1548 (SANQAATDED…PSHEPKHGEL (322 aa)). Positions 1512–1523 (EDHENSHSRDSA) are enriched in basic and acidic residues. Positions 1512–1548 (EDHENSHSRDSAVDDSVDDSVEVTTVTPSHEPKHGEL) are disordered. A Prevents secretion from ER motif is present at residues 1545–1548 (HGEL).

The protein belongs to the glycosyltransferase 8 family. Monomer. May interact with CG7484/Sep15. The cofactor is Ca(2+). Mn(2+) serves as cofactor.

The protein resides in the endoplasmic reticulum lumen. It is found in the endoplasmic reticulum-Golgi intermediate compartment. It carries out the reaction N(4)-(alpha-D-Man-(1-&gt;2)-alpha-D-Man-(1-&gt;2)-alpha-D-Man-(1-&gt;3)-[alpha-D-Man-(1-&gt;2)-alpha-D-Man-(1-&gt;3)-[alpha-D-Man-(1-&gt;2)-alpha-D-Man-(1-&gt;6)]-alpha-D-Man-(1-&gt;6)]-beta-D-Man-(1-&gt;4)-beta-D-GlcNAc-(1-&gt;4)-beta-D-GlcNAc)-L-asparaginyl-[protein] (N-glucan mannose isomer 9A1,2,3B1,2,3) + UDP-alpha-D-glucose = N(4)-(alpha-D-Glc-(1-&gt;3)-alpha-D-Man-(1-&gt;2)-alpha-D-Man-(1-&gt;2)-alpha-D-Man-(1-&gt;3)-[alpha-D-Man-(1-&gt;2)-alpha-D-Man-(1-&gt;3)-[alpha-D-Man-(1-&gt;2)-alpha-D-Man-(1-&gt;6)]-alpha-D-Man-(1-&gt;6)]-beta-D-Man-(1-&gt;4)-beta-D-GlcNAc-(1-&gt;4)-beta-D-GlcNAc)-L-asparaginyl-[protein] + UDP + H(+). It participates in protein modification; protein glycosylation. Its function is as follows. Recognizes glycoproteins with minor folding defects. Reglucosylates single N-glycans near the misfolded part of the protein, thus providing quality control for protein folding in the endoplasmic reticulum. Reglucosylated proteins are recognized by calreticulin for recycling to the endoplasmic reticulum and refolding or degradation. This is UDP-glucose:glycoprotein glucosyltransferase from Drosophila melanogaster (Fruit fly).